The chain runs to 789 residues: Aconitate hydratase, mitochondrial (789 aa).

A mitochondrion-targeting transit peptide spans 1–32 (MFCKISRAPARMGSRIFTQSTLRSFSCAPVAA). Substrate contacts are provided by residues glutamine 106 and 199 to 201 (DSH). Residues cysteine 392, cysteine 455, and cysteine 458 each contribute to the [4Fe-4S] cluster site. Substrate is bound by residues arginine 481, arginine 486, arginine 613, and 676-677 (SR).

This sequence belongs to the aconitase/IPM isomerase family. In terms of assembly, monomer. [4Fe-4S] cluster serves as cofactor.

The protein localises to the mitochondrion. The enzyme catalyses citrate = D-threo-isocitrate. It participates in carbohydrate metabolism; tricarboxylic acid cycle; isocitrate from oxaloacetate: step 2/2. In terms of biological role, catalyzes the isomerization of citrate to isocitrate via cis-aconitate, a step in the citric acid cycle. The protein is Aconitate hydratase, mitochondrial of Schizosaccharomyces pombe (strain 972 / ATCC 24843) (Fission yeast).